The primary structure comprises 178 residues: Protein-export protein SecB (178 aa).

Positions 1-13 (MADEGDVLTDLDM) are enriched in acidic residues. The segment at 1 to 25 (MADEGDVLTDLDMDPAAGGNGADNR) is disordered.

The protein belongs to the SecB family. Homotetramer, a dimer of dimers. One homotetramer interacts with 1 SecA dimer.

The protein resides in the cytoplasm. In terms of biological role, one of the proteins required for the normal export of preproteins out of the cell cytoplasm. It is a molecular chaperone that binds to a subset of precursor proteins, maintaining them in a translocation-competent state. It also specifically binds to its receptor SecA. This is Protein-export protein SecB from Erythrobacter litoralis (strain HTCC2594).